A 157-amino-acid polypeptide reads, in one-letter code: uncharacterized protein (157 aa).

In terms of domain architecture, N-acetyltransferase spans 9–154; that stretch reads LLINYKTLDE…ETNSNAITNE (146 aa).

This is an uncharacterized protein from Bacillus mycoides (strain KBAB4) (Bacillus weihenstephanensis).